The following is a 354-amino-acid chain: Guanine nucleotide-binding protein G(i) subunit alpha-1 (354 aa).

Gly2 carries N-myristoyl glycine lipidation. Cys3 is lipidated: S-palmitoyl cysteine. The G-alpha domain occupies 32-354 (REVKLLLLGA…KNNLKDCGLF (323 aa)). Positions 35 to 48 (KLLLLGAGESGKST) are G1 motif. Residues 43 to 48 (ESGKST), 150 to 151 (DS), and 175 to 178 (LRTR) each bind GTP. Residue Ser47 coordinates Mg(2+). Residues 173–181 (DVLRTRVKT) form a G2 motif region. Thr181 serves as a coordination point for Mg(2+). The G3 motif stretch occupies residues 196-205 (FKMFDVGGQR). Residues 200 to 204 (DVGGQ), 269 to 272 (NKKD), and Ala326 contribute to the GTP site. Positions 265–272 (ILFLNKKD) are G4 motif. The G5 motif stretch occupies residues 324–329 (TCATDT).

It belongs to the G-alpha family. G(i/o/t/z) subfamily. In terms of assembly, heterotrimeric G proteins are composed of 3 units; alpha, beta and gamma. The alpha chain contains the guanine nucleotide binding site. Part of a spindle orientation complex. Identified in complex with the beta subunit GNB1 and the gamma subunit GNG1. Identified in complex with the beta subunit GNB1 and the gamma subunit GNG2. GTP binding causes dissociation of the heterotrimer, liberating the individual subunits so that they can interact with downstream effector proteins. Post-translationally, myristoylation at Gly-2 is required for membrane anchoring before palmitoylation. Palmitoylation at Cys-3 varies with membrane lipid composition.

Its subcellular location is the nucleus. The protein resides in the cytoplasm. It localises to the cell membrane. It is found in the cytoskeleton. The protein localises to the microtubule organizing center. Its subcellular location is the centrosome. The protein resides in the cell cortex. It localises to the membrane. It carries out the reaction GTP + H2O = GDP + phosphate + H(+). Guanine nucleotide-binding proteins (G proteins) function as transducers downstream of G protein-coupled receptors (GPCRs) in numerous signaling cascades. The alpha chain contains the guanine nucleotide binding site and alternates between an active, GTP-bound state and an inactive, GDP-bound state. Signaling by an activated GPCR promotes GDP release and GTP binding. The alpha subunit has a low GTPase activity that converts bound GTP to GDP, thereby terminating the signal. Both GDP release and GTP hydrolysis are modulated by numerous regulatory proteins. Signaling is mediated via effector proteins, such as adenylate cyclase. Inhibits adenylate cyclase activity, leading to decreased intracellular cAMP levels. Required for cortical dynein-dynactin complex recruitment during metaphase. The sequence is that of Guanine nucleotide-binding protein G(i) subunit alpha-1 (gnai1) from Xenopus laevis (African clawed frog).